We begin with the raw amino-acid sequence, 1001 residues long: DNA topoisomerase 3-alpha (1001 aa).

The region spanning 35–179 (KVLCVAEKND…NLQVLRARFS (145 aa)) is the Toprim domain. The region spanning 197–617 (DQRVSDAVDV…QQVQKYKQVF (421 aa)) is the Topo IA-type catalytic domain. Tyr362 serves as the catalytic O-(5'-phospho-DNA)-tyrosine intermediate. Residues 400–424 (GGPTPRNGNKSDQAHPPIHPTKYTN) form a disordered region. The segment at 658-685 (CPQCNKDMVLKTKKNGGFYLSCMGFPEC) adopts a C4-type zinc-finger fold. Residues 774 to 792 (RMDNSQHPQPADSRQTGSS) are compositionally biased toward polar residues. A disordered region spans residues 774–810 (RMDNSQHPQPADSRQTGSSKALAQTLPPPTAAGESNS). Cys813, Cys815, Cys838, Cys843, Cys897, Cys899, Cys922, and Cys930 together coordinate Zn(2+). GRF-type zinc fingers lie at residues 813 to 852 (CNCG…ADSP) and 897 to 939 (CLCS…VDEN). A disordered region spans residues 937–1001 (DENTAPGTSG…HTRPFCPQNR (65 aa)). The span at 953 to 964 (DRGRTLESEARS) shows a compositional bias: basic and acidic residues.

It belongs to the type IA topoisomerase family. Binds ssDNA. Interacts (via N-terminal region) with BLM; the interaction is direct. Directly interacts with RMI1. Component of the RMI complex, containing at least TOP3A, RMI1 and RMI2. The RMI complex interacts with BLM. It depends on Mg(2+) as a cofactor. In terms of tissue distribution, high expression is found in testis, heart, skeletal muscle and pancreas.

Its subcellular location is the mitochondrion matrix. The catalysed reaction is ATP-independent breakage of single-stranded DNA, followed by passage and rejoining.. Functionally, releases the supercoiling and torsional tension of DNA introduced during the DNA replication and transcription by transiently cleaving and rejoining one strand of the DNA duplex. Introduces a single-strand break via transesterification at a target site in duplex DNA. The scissile phosphodiester is attacked by the catalytic tyrosine of the enzyme, resulting in the formation of a DNA-(5'-phosphotyrosyl)-enzyme intermediate and the expulsion of a 3'-OH DNA strand. The free DNA strand then undergoes passage around the unbroken strand thus removing DNA supercoils. Finally, in the religation step, the DNA 3'-OH attacks the covalent intermediate to expel the active-site tyrosine and restore the DNA phosphodiester backbone. As an essential component of the RMI complex it is involved in chromosome separation and the processing of homologous recombination intermediates to limit DNA crossover formation in cells. Has DNA decatenation activity. It is required for mtDNA decatenation and segregation after completion of replication, in a process that does not require BLM, RMI1 and RMI2. This is DNA topoisomerase 3-alpha (TOP3A) from Homo sapiens (Human).